Reading from the N-terminus, the 326-residue chain is Aspartate carbamoyltransferase catalytic subunit (326 aa).

Residues Arg58 and Thr59 each coordinate carbamoyl phosphate. Lys86 contributes to the L-aspartate binding site. Carbamoyl phosphate is bound by residues Arg108, His141, and Gln144. Arg181 and Arg239 together coordinate L-aspartate. Carbamoyl phosphate contacts are provided by Gly280 and Pro281.

The protein belongs to the aspartate/ornithine carbamoyltransferase superfamily. ATCase family. In terms of assembly, heterododecamer (2C3:3R2) of six catalytic PyrB chains organized as two trimers (C3), and six regulatory PyrI chains organized as three dimers (R2).

The enzyme catalyses carbamoyl phosphate + L-aspartate = N-carbamoyl-L-aspartate + phosphate + H(+). The protein operates within pyrimidine metabolism; UMP biosynthesis via de novo pathway; (S)-dihydroorotate from bicarbonate: step 2/3. Its function is as follows. Catalyzes the condensation of carbamoyl phosphate and aspartate to form carbamoyl aspartate and inorganic phosphate, the committed step in the de novo pyrimidine nucleotide biosynthesis pathway. The protein is Aspartate carbamoyltransferase catalytic subunit of Synechococcus sp. (strain JA-2-3B'a(2-13)) (Cyanobacteria bacterium Yellowstone B-Prime).